We begin with the raw amino-acid sequence, 326 residues long: DNA-directed RNA polymerase subunit alpha (326 aa).

An alpha N-terminal domain (alpha-NTD) region spans residues 1-231; it reads MQSNALLKPR…DQLSVFADLE (231 aa). Residues 245–326 form an alpha C-terminal domain (alpha-CTD) region; it reads IDPVLLRPVD…WPPAGLEKLG (82 aa).

The protein belongs to the RNA polymerase alpha chain family. Homodimer. The RNAP catalytic core consists of 2 alpha, 1 beta, 1 beta' and 1 omega subunit. When a sigma factor is associated with the core the holoenzyme is formed, which can initiate transcription.

It carries out the reaction RNA(n) + a ribonucleoside 5'-triphosphate = RNA(n+1) + diphosphate. DNA-dependent RNA polymerase catalyzes the transcription of DNA into RNA using the four ribonucleoside triphosphates as substrates. In Azoarcus sp. (strain BH72), this protein is DNA-directed RNA polymerase subunit alpha.